The sequence spans 314 residues: Synaptophysin (314 aa).

The Cytoplasmic portion of the chain corresponds to 1–25 (MLLLADMDVVNQLVAGGQFRVVKEP). Residues 21 to 228 (VVKEPLGFVK…NLWFVFKETG (208 aa)) enclose the MARVEL domain. The helical transmembrane segment at 26–49 (LGFVKVLQWVFAIFAFATCGSYTG) threads the bilayer. Topologically, residues 50 to 107 (ELRLSVECANKTESALNIEVEFEYPFRLHQVYFDAPSCVKGGTTKIFLVGDYSSSAEF) are vesicular. N-linked (GlcNAc...) asparagine glycosylation is present at Asn-59. Position 81 is a phosphotyrosine (Tyr-81). The chain crosses the membrane as a helical span at residues 108-131 (FVTVAVFAFLYSMGALATYIFLQN). At 132 to 138 (KYRENNK) the chain is on the cytoplasmic side. The helical transmembrane segment at 139 to 162 (GPMMDFLATAVFAFMWLVSSSAWA) threads the bilayer. At 163–200 (KGLSDVKMATDPENIIKEMPMCRQTGNTCKELRDPVTS) the chain is on the vesicular side. The helical transmembrane segment at 201-224 (GLNTSVVFGFLNLVLWVGNLWFVF) threads the bilayer. At 225-314 (KETGWAAPFM…GAPTSFSNQM (90 aa)) the chain is on the cytoplasmic side. At Thr-227 the chain carries Phosphothreonine. A disordered region spans residues 239-314 (GAPEKQPAPG…GAPTSFSNQM (76 aa)). Residues 254-264 (AGYGQGPGGYG) are compositionally biased toward gly residues. A repeats, Gly-rich region spans residues 255–305 (GYGQGPGGYGPQDSYGPQGGYQPDYGQPASGGGGGYGPQGDYGQQGYGQQG). The segment covering 265-282 (PQDSYGPQGGYQPDYGQP) has biased composition (low complexity). Residues Tyr-279 and Tyr-296 each carry the phosphotyrosine modification. Gly residues predominate over residues 283–303 (ASGGGGGYGPQGDYGQQGYGQ).

It belongs to the synaptophysin/synaptobrevin family. Homohexamer or homotetramer. Interacts with SRCIN1. Interacts with VAMP2; the interaction is inhibited by interaction of VAPM2 with SEPT8. In terms of processing, ubiquitinated; mediated by SIAH1 or SIAH2 and leading to its subsequent proteasomal degradation. Post-translationally, phosphorylated by SRC.

Its subcellular location is the cytoplasmic vesicle. The protein localises to the secretory vesicle. It is found in the synaptic vesicle membrane. The protein resides in the synapse. It localises to the synaptosome. Its function is as follows. Possibly involved in structural functions as organizing other membrane components or in targeting the vesicles to the plasma membrane. Involved in the regulation of short-term and long-term synaptic plasticity. This chain is Synaptophysin (Syp), found in Mus musculus (Mouse).